Reading from the N-terminus, the 254-residue chain is Thiazole synthase (254 aa).

Lys96 functions as the Schiff-base intermediate with DXP in the catalytic mechanism. Residues Gly157, 183-184, and 205-206 each bind 1-deoxy-D-xylulose 5-phosphate; these read AG and NT.

This sequence belongs to the ThiG family. Homotetramer. Forms heterodimers with either ThiH or ThiS.

It localises to the cytoplasm. The catalysed reaction is [ThiS sulfur-carrier protein]-C-terminal-Gly-aminoethanethioate + 2-iminoacetate + 1-deoxy-D-xylulose 5-phosphate = [ThiS sulfur-carrier protein]-C-terminal Gly-Gly + 2-[(2R,5Z)-2-carboxy-4-methylthiazol-5(2H)-ylidene]ethyl phosphate + 2 H2O + H(+). It functions in the pathway cofactor biosynthesis; thiamine diphosphate biosynthesis. Functionally, catalyzes the rearrangement of 1-deoxy-D-xylulose 5-phosphate (DXP) to produce the thiazole phosphate moiety of thiamine. Sulfur is provided by the thiocarboxylate moiety of the carrier protein ThiS. In vitro, sulfur can be provided by H(2)S. The polypeptide is Thiazole synthase (Bacillus velezensis (strain DSM 23117 / BGSC 10A6 / LMG 26770 / FZB42) (Bacillus amyloliquefaciens subsp. plantarum)).